An 89-amino-acid polypeptide reads, in one-letter code: Small ribosomal subunit protein bS20 (89 aa).

Residues 1–22 (MANTASARKRIRQNERRRERNV) are disordered. Positions 12–22 (RQNERRRERNV) are enriched in basic and acidic residues.

It belongs to the bacterial ribosomal protein bS20 family.

In terms of biological role, binds directly to 16S ribosomal RNA. The protein is Small ribosomal subunit protein bS20 of Gluconobacter oxydans (strain 621H) (Gluconobacter suboxydans).